The sequence spans 58 residues: UPF0337 protein OB2685 (58 aa).

Composition is skewed to basic and acidic residues over residues Met-1–Asp-22 and Asp-30–Ala-46. The interval Met-1–Lys-58 is disordered.

Belongs to the UPF0337 (CsbD) family.

This Oceanobacillus iheyensis (strain DSM 14371 / CIP 107618 / JCM 11309 / KCTC 3954 / HTE831) protein is UPF0337 protein OB2685.